A 249-amino-acid chain; its full sequence is Aspartate/glutamate leucyltransferase (249 aa).

Belongs to the R-transferase family. Bpt subfamily.

The protein resides in the cytoplasm. It carries out the reaction N-terminal L-glutamyl-[protein] + L-leucyl-tRNA(Leu) = N-terminal L-leucyl-L-glutamyl-[protein] + tRNA(Leu) + H(+). The catalysed reaction is N-terminal L-aspartyl-[protein] + L-leucyl-tRNA(Leu) = N-terminal L-leucyl-L-aspartyl-[protein] + tRNA(Leu) + H(+). Functions in the N-end rule pathway of protein degradation where it conjugates Leu from its aminoacyl-tRNA to the N-termini of proteins containing an N-terminal aspartate or glutamate. The sequence is that of Aspartate/glutamate leucyltransferase from Brucella suis (strain ATCC 23445 / NCTC 10510).